Reading from the N-terminus, the 294-residue chain is N-acetylmuramic acid 6-phosphate etherase (294 aa).

The 164-residue stretch at 56 to 219 (TSYSLRNGGR…STLSMVSVGK (164 aa)) folds into the SIS domain. Catalysis depends on Glu-84, which acts as the Proton donor. The active site involves Glu-115.

The protein belongs to the GCKR-like family. MurNAc-6-P etherase subfamily. In terms of assembly, homodimer.

It carries out the reaction N-acetyl-D-muramate 6-phosphate + H2O = N-acetyl-D-glucosamine 6-phosphate + (R)-lactate. It participates in amino-sugar metabolism; 1,6-anhydro-N-acetylmuramate degradation. Its pathway is amino-sugar metabolism; N-acetylmuramate degradation. It functions in the pathway cell wall biogenesis; peptidoglycan recycling. Its function is as follows. Specifically catalyzes the cleavage of the D-lactyl ether substituent of MurNAc 6-phosphate, producing GlcNAc 6-phosphate and D-lactate. Together with AnmK, is also required for the utilization of anhydro-N-acetylmuramic acid (anhMurNAc) either imported from the medium or derived from its own cell wall murein, and thus plays a role in cell wall recycling. The sequence is that of N-acetylmuramic acid 6-phosphate etherase from Francisella tularensis subsp. tularensis (strain SCHU S4 / Schu 4).